The chain runs to 163 residues: Cyclic pyranopterin monophosphate synthase (163 aa).

Residues 75–77 and 115–116 contribute to the substrate site; these read LCH and ME. Asp-130 is an active-site residue.

The protein belongs to the MoaC family. Homohexamer; trimer of dimers.

The catalysed reaction is (8S)-3',8-cyclo-7,8-dihydroguanosine 5'-triphosphate = cyclic pyranopterin phosphate + diphosphate. Its pathway is cofactor biosynthesis; molybdopterin biosynthesis. In terms of biological role, catalyzes the conversion of (8S)-3',8-cyclo-7,8-dihydroguanosine 5'-triphosphate to cyclic pyranopterin monophosphate (cPMP). This is Cyclic pyranopterin monophosphate synthase from Variovorax paradoxus (strain S110).